Here is a 656-residue protein sequence, read N- to C-terminus: Phosphoprotein 85 (656 aa).

2 disordered regions span residues 1–174 and 615–656; these read MSSR…EGDE and NGNH…EYCC. The span at 46-55 shows a compositional bias: basic and acidic residues; the sequence is SATEDLDRME. Composition is skewed to low complexity over residues 59–70 and 140–160; these read SPYSVSSDAPSS and DNSS…RSTS. Residues 625 to 634 show a composition bias toward pro residues; that stretch reads SPPPPLPPRD. Basic and acidic residues predominate over residues 635–656; that stretch reads YPQRDERDRHRRDRRDSGEYCC.

Belongs to the herpesviridae pp85 family. Phosphorylated.

Its subcellular location is the virion tegument. The protein localises to the host cytoplasm. This is Phosphoprotein 85 (UL25) from Homo sapiens (Human).